A 351-amino-acid chain; its full sequence is UDP-3-O-acylglucosamine N-acyltransferase (351 aa).

His-240 acts as the Proton acceptor in catalysis.

It belongs to the transferase hexapeptide repeat family. LpxD subfamily. Homotrimer.

It carries out the reaction a UDP-3-O-[(3R)-3-hydroxyacyl]-alpha-D-glucosamine + a (3R)-hydroxyacyl-[ACP] = a UDP-2-N,3-O-bis[(3R)-3-hydroxyacyl]-alpha-D-glucosamine + holo-[ACP] + H(+). It participates in bacterial outer membrane biogenesis; LPS lipid A biosynthesis. Functionally, catalyzes the N-acylation of UDP-3-O-acylglucosamine using 3-hydroxyacyl-ACP as the acyl donor. Is involved in the biosynthesis of lipid A, a phosphorylated glycolipid that anchors the lipopolysaccharide to the outer membrane of the cell. The polypeptide is UDP-3-O-acylglucosamine N-acyltransferase (Pseudomonas fluorescens (strain SBW25)).